Here is a 357-residue protein sequence, read N- to C-terminus: Vomeronasal type-1 receptor 5 (357 aa).

Residues 1–3 (MLK) lie on the Extracellular side of the membrane. A helical membrane pass occupies residues 4 to 24 (LVIIENMAEIMLFSLDLLLFS). Over 25–52 (TDILCFNFPSKMIKLPGFITIQIFFYPQ) the chain is Cytoplasmic. A helical transmembrane segment spans residues 53-73 (ASFGISANTILLLFHIFTFVF). The Extracellular segment spans residues 74–81 (SHRSKSID). A helical membrane pass occupies residues 82-102 (MIISHLSLIHILLLFTQAILV). Residues 103–130 (SLDFFGSQNTQDDLRYKVIVFLNKVMRG) lie on the Cytoplasmic side of the membrane. Residues 131–151 (LSICTPCLLSVLQAIISPSIF) traverse the membrane as a helical segment. The Extracellular segment spans residues 152–163 (SLAKLKHPSASH). Residues 164–184 (ILGFFLFSWVLNMFIGVIFCC) traverse the membrane as a helical segment. Topologically, residues 185–269 (TLRLPPVKRG…RVSPVKRASQ (85 aa)) are cytoplasmic. The helical transmembrane segment at 270–290 (AILLLVSFVFTYWVDFTFSFS) threads the bilayer. The Extracellular portion of the chain corresponds to 291 to 300 (GGVTWINDSL). N-linked (GlcNAc...) asparagine glycosylation is present at asparagine 297. Residues 301 to 321 (LVWLQVIVANSYAAISPLMLI) traverse the membrane as a helical segment. At 322-357 (YADNQIFKTLQMLWFKYLSPPKLMLKFNRQCGSTKK) the chain is on the cytoplasmic side.

This sequence belongs to the G-protein coupled receptor 1 family.

Its subcellular location is the cell membrane. Its function is as follows. Putative pheromone receptor. This Homo sapiens (Human) protein is Vomeronasal type-1 receptor 5 (VN1R5).